A 38-amino-acid polypeptide reads, in one-letter code: Large ribosomal subunit protein bL36 (38 aa).

The protein belongs to the bacterial ribosomal protein bL36 family.

The polypeptide is Large ribosomal subunit protein bL36 (Wigglesworthia glossinidia brevipalpis).